We begin with the raw amino-acid sequence, 174 residues long: Co-chaperone protein HscB homolog (174 aa).

One can recognise a J domain in the interval 2–74 (NYFELFNLPV…IRRAEHMLAL (73 aa)).

It belongs to the HscB family. As to quaternary structure, interacts with HscA and stimulates its ATPase activity.

Its function is as follows. Co-chaperone involved in the maturation of iron-sulfur cluster-containing proteins. Seems to help targeting proteins to be folded toward HscA. The protein is Co-chaperone protein HscB homolog of Shewanella amazonensis (strain ATCC BAA-1098 / SB2B).